We begin with the raw amino-acid sequence, 430 residues long: Serine--tRNA ligase (430 aa).

237–239 is an L-serine binding site; it reads TAE. 268-270 contacts ATP; sequence RSE. E291 is a binding site for L-serine. 355-358 contributes to the ATP binding site; sequence EISS. S391 is an L-serine binding site.

Belongs to the class-II aminoacyl-tRNA synthetase family. Type-1 seryl-tRNA synthetase subfamily. Homodimer. The tRNA molecule binds across the dimer.

It localises to the cytoplasm. The enzyme catalyses tRNA(Ser) + L-serine + ATP = L-seryl-tRNA(Ser) + AMP + diphosphate + H(+). It catalyses the reaction tRNA(Sec) + L-serine + ATP = L-seryl-tRNA(Sec) + AMP + diphosphate + H(+). It participates in aminoacyl-tRNA biosynthesis; selenocysteinyl-tRNA(Sec) biosynthesis; L-seryl-tRNA(Sec) from L-serine and tRNA(Sec): step 1/1. Functionally, catalyzes the attachment of serine to tRNA(Ser). Is also able to aminoacylate tRNA(Sec) with serine, to form the misacylated tRNA L-seryl-tRNA(Sec), which will be further converted into selenocysteinyl-tRNA(Sec). The sequence is that of Serine--tRNA ligase from Shigella boydii serotype 18 (strain CDC 3083-94 / BS512).